The sequence spans 492 residues: Dipeptide permease D (492 aa).

13 helical membrane-spanning segments follow: residues 14–34 (VVALQIWEYFSFYGMRALLIL), 49–69 (ALFSAYCSLVYVTPILGGYLA), 91–111 (LVLGASETAPLFLYLSLAIIV), 138–158 (GGFSLMYAAGNIGSIIAPIAC), 167–187 (WAMGFALAAIGMVAGLVIFLC), 212–232 (NWGWLLVLLVTAPLLIAVLFW), 236–256 (SVYALIVATAIGLAVLARIYL), 269–289 (LIVVLTAFSLLFWAFAQQGGS), 312–332 (MFQSINAFAVMLCGMVLAWLV), 344–364 (IWGKFALGLGLMSAGFCILTL), 379–399 (LMVLGLAVMGFAELFIDPVAM), 413–433 (VLTGIYMLLSGAIANYLAGVI), and 458–478 (VFSQITWGALACVGVVLVIWL).

The protein belongs to the major facilitator superfamily. Proton-dependent oligopeptide transporter (POT/PTR) (TC 2.A.17) family. DtpD subfamily.

The protein resides in the cell inner membrane. In terms of biological role, probable proton-dependent permease that transports dipeptides. The polypeptide is Dipeptide permease D (Klebsiella pneumoniae subsp. pneumoniae (strain ATCC 700721 / MGH 78578)).